We begin with the raw amino-acid sequence, 253 residues long: Indole-3-glycerol phosphate synthase (253 aa).

The protein belongs to the TrpC family.

It catalyses the reaction 1-(2-carboxyphenylamino)-1-deoxy-D-ribulose 5-phosphate + H(+) = (1S,2R)-1-C-(indol-3-yl)glycerol 3-phosphate + CO2 + H2O. It functions in the pathway amino-acid biosynthesis; L-tryptophan biosynthesis; L-tryptophan from chorismate: step 4/5. This is Indole-3-glycerol phosphate synthase from Bacillus cereus (strain ZK / E33L).